The chain runs to 605 residues: MAEDWLDCPALGPGWKRREVFRKSGATCGRSDTYYQSPTGDRIRSKVELTRYLGPACDLTLFDFKQGILCYPAPKAHPVAVASKKRKKPSRPAKTRKRQVGPQSGEVRKEAPRDETKADTDTAPASFPAPGCCENCGISFSGDGTQRQRLKTLCKDCRAQRIAFNREQRMFKRVGCGECAACQVTEDCGACSTCLLQLPHDVASGLFCKCERRRCLRIVERSRGCGVCRGCQTQEDCGHCPICLRPPRPGLRRQWKCVQRRCLRGKHARRKGGCDSKMAARRRPGAQPLPPPPPSQSPEPTEPHPRALAPSPPAEFIYYCVDEDELQPYTNRRQNRKCGACAACLRRMDCGRCDFCCDKPKFGGSNQKRQKCRWRQCLQFAMKRLLPSVWSESEDGAGSPPPYRRRKRPSSARRHHLGPTLKPTLATRTAQPDHTQAPTKQEAGGGFVLPPPGTDLVFLREGASSPVQVPGPVAASTEALLQEAQCSGLSWVVALPQVKQEKADTQDEWTPGTAVLTSPVLVPGCPSKAVDPGLPSVKQEPPDPEEDKEENKDDSASKLAPEEEAGGAGTPVITEIFSLGGTRFRDTAVWLPRSKDLKKPGARKQ.

Residues 1 to 69 (MAEDWLDCPA…TLFDFKQGIL (69 aa)) enclose the MBD domain. The tract at residues 80–123 (AVASKKRKKPSRPAKTRKRQVGPQSGEVRKEAPRDETKADTDTA) is disordered. Positions 83-99 (SKKRKKPSRPAKTRKRQ) are enriched in basic residues. A Nuclear localization signal motif is present at residues 84–88 (KKRKK). Residues 106–120 (EVRKEAPRDETKADT) show a composition bias toward basic and acidic residues. Residue Lys-117 forms a Glycyl lysine isopeptide (Lys-Gly) (interchain with G-Cter in SUMO2) linkage. 2 CXXC-type zinc fingers span residues 169 to 216 (RMFK…RRCL) and 217 to 263 (RIVE…RRCL). The Zn(2+) site is built by Cys-176, Cys-179, Cys-182, Cys-188, Cys-191, Cys-194, Cys-210, Cys-215, Cys-225, Cys-228, Cys-231, Cys-237, Cys-240, Cys-243, Cys-257, and Cys-262. A disordered region spans residues 269 to 308 (RRKGGCDSKMAARRRPGAQPLPPPPPSQSPEPTEPHPRAL). Lys-277 participates in a covalent cross-link: Glycyl lysine isopeptide (Lys-Gly) (interchain with G-Cter in SUMO2). Residues 287 to 297 (QPLPPPPPSQS) are compositionally biased toward pro residues. Ser-297 is modified (phosphoserine). A CXXC-type 3 zinc finger spans residues 330–378 (TNRRQNRKCGACAACLRRMDCGRCDFCCDKPKFGGSNQKRQKCRWRQCL). Cys-338, Cys-341, Cys-344, Cys-350, Cys-353, Cys-356, Cys-372, and Cys-377 together coordinate Zn(2+). Phosphoserine is present on residues Ser-391 and Ser-399. The segment at 391-451 (SESEDGAGSP…EAGGGFVLPP (61 aa)) is disordered. A compositionally biased stretch (basic residues) spans 403–417 (YRRRKRPSSARRHHL). Residue Lys-422 forms a Glycyl lysine isopeptide (Lys-Gly) (interchain with G-Cter in SUMO2) linkage. Positions 426 to 439 (ATRTAQPDHTQAPT) are enriched in polar residues. Lys-440 is covalently cross-linked (Glycyl lysine isopeptide (Lys-Gly) (interchain with G-Cter in SUMO2)). Residues Lys-499 and Lys-538 each participate in a glycyl lysine isopeptide (Lys-Gly) (interchain with G-Cter in SUMO2); alternate cross-link. A disordered region spans residues 520–573 (VLVPGCPSKAVDPGLPSVKQEPPDPEEDKEENKDDSASKLAPEEEAGGAGTPVI). The transcriptional repression domain (TRD) stretch occupies residues 529-592 (AVDPGLPSVK…RFRDTAVWLP (64 aa)). Lys-558 is covalently cross-linked (Glycyl lysine isopeptide (Lys-Gly) (interchain with G-Cter in SUMO2)).

As to quaternary structure, interacts with OASL, ATF7IP, ATF7IP2 and BAHD1. Binds CHAF1A and the SUV39H1-CBX5 complex via the MBD domain. Binds MGP via the TRD domain. May be part of the MeCP1 complex. Sumoylated, sumoylation may increase interaction with ATF7IP. In terms of tissue distribution, widely expressed.

Its subcellular location is the nucleus. The protein localises to the nucleus matrix. It localises to the nucleus speckle. The protein resides in the chromosome. In terms of biological role, transcriptional repressor that binds CpG islands in promoters where the DNA is methylated at position 5 of cytosine within CpG dinucleotides. Binding is abolished by the presence of 7-mG that is produced by DNA damage by methylmethanesulfonate (MMS). Acts as transcriptional repressor and plays a role in gene silencing by recruiting ATF7IP, which in turn recruits factors such as the histone methyltransferase SETDB1. Probably forms a complex with SETDB1 and ATF7IP that represses transcription and couples DNA methylation and histone 'Lys-9' trimethylation. Isoform 1 and isoform 2 can also repress transcription from unmethylated promoters. This is Methyl-CpG-binding domain protein 1 from Homo sapiens (Human).